Reading from the N-terminus, the 338-residue chain is 1-aminocyclopropane-1-carboxylate deaminase (338 aa).

Residue K51 is modified to N6-(pyridoxal phosphate)lysine. The Nucleophile role is filled by S78.

The protein belongs to the ACC deaminase/D-cysteine desulfhydrase family. As to quaternary structure, homotrimer. Pyridoxal 5'-phosphate serves as cofactor.

It catalyses the reaction 1-aminocyclopropane-1-carboxylate + H2O = 2-oxobutanoate + NH4(+). Catalyzes a cyclopropane ring-opening reaction, the irreversible conversion of 1-aminocyclopropane-1-carboxylate (ACC) to ammonia and alpha-ketobutyrate. Allows growth on ACC as a nitrogen source. In Burkholderia cenocepacia (strain ATCC BAA-245 / DSM 16553 / LMG 16656 / NCTC 13227 / J2315 / CF5610) (Burkholderia cepacia (strain J2315)), this protein is 1-aminocyclopropane-1-carboxylate deaminase.